A 1356-amino-acid polypeptide reads, in one-letter code: MLLIIFILPTTLAVIGDFNCTNFAINDLNTTVPRISEYVVDVSYGLGTYYILDRVYLNTTILFTGYFPKSGANFRDLSLKGTTYLSTLWYQKPFLSDFNNGIFSRVKNTKLYVNKTLYSEFSTIVIGSVFINNSYTIVVQPHNGVLEITACQYTMCEYPHTICKSKGSSRNESWHFDKSEPLCLFKKNFTYNVSTDWLYFHFYQERGTFYAYYADSGMPTTFLFSLYLGTLLSHYYVLPLTCNAISSNTDNETLQYWVTPLSKRQYLLKFDNRGVITNAVDCSSSFFSEIQCKTKSLLPNTGVYDLSGFTVKPVATVHRRIPDLPDCDIDKWLNNFNVPSPLNWERKIFSNCNFNLSTLLRLVHTDSFSCNNFDESKIYGSCFKSIVLDKFAIPNSRRSDLQLGSSGFLQSSNYKIDTTSSSCQLYYSLPAINVTINNYNPSSWNRRYGFNNFNLSSHSVVYSRYCFSVNNTFCPCAKPSFASSCKSHKPPSASCPIGTNYRSCESTTVLDHTDWCRCSCLPDPITAYDPRSCSQKKSLVGVGEHCAGFGVDEEKCGVLDGSYNVSCLCSTDAFLGWSYDTCVSNNRCNIFSNFILNGINSGTTCSNDLLQPNTEVFTDVCVDYDLYGITGQGIFKEVSAVYYNSWQNLLYDSNGNIIGFKDFVTNKTYNIFPCYAGRVSAAFHQNASSLALLYRNLKCSYVLNNISLTTQPYFDSYLGCVFNADNLTDYSVSSCALRMGSGFCVDYNSPSSSSSRRKRRSISASYRFVTFEPFNVSFVNDSIESVGGLYEIKIPTNFTIVGQEEFIQTNSPKVTIDCSLFVCSNYAACHDLLSEYGTFCDNINSILDEVNGLLDTTQLHVADTLMQGVTLSSNLNTNLHFDVDNINFKSLVGCLGPHCGSSSRSFFEDLLFDKVKLSDVGFVEAYNNCTGGSEIRDLLCVQSFNGIKVLPPILSESQISGYTTAATVAAMFPPWSAAAGIPFSLNVQYRINGLGVTMDVLNKNQKLIATAFNNALLSIQNGFSATNSALAKIQSVVNSNAQALNSLLQQLFNKFGAISSSLQEILSRLDALEAQVQIDRLINGRLTALNAYVSQQLSDISLVKFGAALAMEKVNECVKSQSPRINFCGNGNHILSLVQNAPYGLLFMHFSYKPISFKTVLVSPGLCISGDVGIAPKQGYFIKHNDHWMFTGSSYYYPEPISDKNVVFMNTCSVNFTKAPLVYLNHSVPKLSDFESELSHWFKNQTSIAPNLTLNLHTINATFLDLYYEMNLIQESIKSLNNSYINLKDIGTYEMYVKWPWYVWLLISFSFIIFLVLLFFICCCTGCGSACFSKCHNCCDEYGGHHDFVIKTSHDD.

Positions 1-12 (MLLIIFILPTTL) are cleaved as a signal peptide. The Extracellular segment spans residues 13 to 1300 (AVIGDFNCTN…GTYEMYVKWP (1288 aa)). The BetaCoV S1-NTD domain occupies 14–294 (VIGDFNCTNF…SFFSEIQCKT (281 aa)). Asparagine 19, asparagine 29, asparagine 58, asparagine 114, asparagine 132, asparagine 171, asparagine 188, asparagine 192, and asparagine 251 each carry an N-linked (GlcNAc...) asparagine; by host glycan. Intrachain disulfides connect cysteine 20–cysteine 156, cysteine 151–cysteine 183, and cysteine 163–cysteine 242. 2 disulfide bridges follow: cysteine 282–cysteine 292 and cysteine 327–cysteine 352. The 283-residue stretch at 325–607 (PDCDIDKWLN…GINSGTTCSN (283 aa)) folds into the BetaCoV S1-CTD domain. Asparagine 355 is a glycosylation site (N-linked (GlcNAc...) asparagine; by host). 2 disulfides stabilise this stretch: cysteine 370-cysteine 423 and cysteine 382-cysteine 605. N-linked (GlcNAc...) asparagine; by host glycans are attached at residues asparagine 433, asparagine 454, asparagine 470, asparagine 564, asparagine 666, asparagine 686, asparagine 705, asparagine 726, asparagine 775, asparagine 780, and asparagine 797. Fusion peptide regions lie at residues 905–926 (SFFE…VEAY) and 924–944 (EAYN…VQSF). Asparagine 928 is a glycosylation site (N-linked (GlcNAc...) asparagine; by host). Cysteine 929 and cysteine 940 are joined by a disulfide. Positions 1005–1055 (QKLIATAFNNALLSIQNGFSATNSALAKIQSVVNSNAQALNSLLQQLFNKF) are heptad repeat 1. The stretch at 1034-1078 (QSVVNSNAQALNSLLQQLFNKFGAISSSLQEILSRLDALEAQVQI) forms a coiled coil. Residues asparagine 1215, asparagine 1225, asparagine 1244, asparagine 1251, asparagine 1260, and asparagine 1281 are each glycosylated (N-linked (GlcNAc...) asparagine; by host). The heptad repeat 2 stretch occupies residues 1249-1289 (APNLTLNLHTINATFLDLYYEMNLIQESIKSLNNSYINLKD). A coiled-coil region spans residues 1262-1290 (TFLDLYYEMNLIQESIKSLNNSYINLKDI). The chain crosses the membrane as a helical span at residues 1301–1321 (WYVWLLISFSFIIFLVLLFFI). The Cytoplasmic portion of the chain corresponds to 1322-1356 (CCCTGCGSACFSKCHNCCDEYGGHHDFVIKTSHDD). The KxHxx signature appears at 1352-1356 (TSHDD).

Belongs to the betacoronaviruses spike protein family. As to quaternary structure, homotrimer; each monomer consists of a S1 and a S2 subunit. The resulting peplomers protrude from the virus surface as spikes. In terms of processing, specific enzymatic cleavages in vivo yield mature proteins. The precursor is processed into S1 and S2 by host cell furin or another cellular protease to yield the mature S1 and S2 proteins. Additionally, a second cleavage leads to the release of a fusion peptide after viral attachment to host cell receptor. The cytoplasmic Cys-rich domain is palmitoylated. Spike glycoprotein is digested within host endosomes.

The protein localises to the virion membrane. It localises to the host endoplasmic reticulum-Golgi intermediate compartment membrane. The protein resides in the host cell membrane. Its function is as follows. Attaches the virion to the cell membrane by interacting with host receptor, initiating the infection. Functionally, mediates fusion of the virion and cellular membranes by acting as a class I viral fusion protein. Under the current model, the protein has at least three conformational states: pre-fusion native state, pre-hairpin intermediate state, and post-fusion hairpin state. During viral and target cell membrane fusion, the coiled coil regions (heptad repeats) assume a trimer-of-hairpins structure, positioning the fusion peptide in close proximity to the C-terminal region of the ectodomain. The formation of this structure appears to drive apposition and subsequent fusion of viral and target cell membranes. Acts as a viral fusion peptide which is unmasked following S2 cleavage occurring upon virus endocytosis. The sequence is that of Spike glycoprotein from Human coronavirus HKU1 (isolate N1) (HCoV-HKU1).